The chain runs to 448 residues: MASRIADSLFAFTGPQQCLPRVPKLAASSARVSPGVYAVKPIDLLLKGRTHRSRRCVAPVKRRIGCIKAVAAPVAPPSADSAEDREQLAESYGFRQIGEDLPENVTLKDIMDTLPKEVFEIDDLKALKSVLISVTSYTLGLFMIAKSPWYLLPLAWAWTGTAITGFFVIGHDCAHKSFSKNKLVEDIVGTLAFLPLVYPYEPWRFKHDRHHAKTNMLVHDTAWQPVPPEEFESSPVMRKAIIFGYGPIRPWLSIAHWVNWHFNLKKFRASEVNRVKISLACVFAFMAVGWPLIVYKVGILGWVKFWLMPWLGYHFWMSTFTMVHHTAPHIPFKPADEWNAAQAQLNGTVHCDYPSWIEILCHDINVHIPHHISPRIPSYNLRAAHESIQENWGKYTNLATWNWRLMKTIMTVCHVYDKEENYIPFDRLAPEESQPITFLKKAMPNYTA.

The transit peptide at 1 to 69 (MASRIADSLF…VKRRIGCIKA (69 aa)) directs the protein to the chloroplast. The residue at position 70 (Val70) is an N-acetylvaline. A run of 2 helical transmembrane segments spans residues 124 to 144 (LKAL…LFMI) and 149 to 169 (WYLL…FFVI). Residues 171–175 (HDCAH) carry the Histidine box-1 motif. The Histidine box-2 signature appears at 207–211 (HDRHH). A run of 2 helical transmembrane segments spans residues 282-302 (VFAF…ILGW) and 303-323 (VKFW…FTMV). The short motif at 367–371 (HIPHH) is the Histidine box-3 element.

This sequence belongs to the fatty acid desaturase type 1 family.

It localises to the plastid. The protein resides in the chloroplast inner membrane. It catalyses the reaction a (9Z)-octadecenoyl-containing glycerolipid + 2 reduced [2Fe-2S]-[ferredoxin] + O2 + 2 H(+) = a (9Z,12Z)-octadecadienoyl-containing glycerolipid + 2 oxidized [2Fe-2S]-[ferredoxin] + 2 H2O. Its pathway is lipid metabolism; polyunsaturated fatty acid biosynthesis. Its function is as follows. Chloroplast omega-6 fatty acid desaturase introduces the second double bond in the biosynthesis of 16:3 and 18:3 fatty acids, important constituents of plant membranes. It is thought to use ferredoxin as an electron donor and to act on fatty acids esterified to galactolipids, sulfolipids and phosphatidylglycerol. This Arabidopsis thaliana (Mouse-ear cress) protein is Omega-6 fatty acid desaturase, chloroplastic.